The following is a 351-amino-acid chain: Autoinducer 2 import system permease protein LsrC (351 aa).

9 helical membrane-spanning segments follow: residues Leu14–Leu34, Met39–Leu59, Ile70–Ala90, Leu93–Leu113, Ile115–Leu135, Ile155–Trp175, Met213–Pro233, Gly252–Leu272, and Leu284–Asp304.

It belongs to the binding-protein-dependent transport system permease family. AraH/RbsC subfamily. In terms of assembly, the complex is composed of two ATP-binding proteins (LsrA), two transmembrane proteins (LsrC and LsrD) and a solute-binding protein (LsrB).

It localises to the cell inner membrane. Functionally, part of the ABC transporter complex LsrABCD involved in autoinducer 2 (AI-2) import. Probably responsible for the translocation of the substrate across the membrane. In Yersinia pseudotuberculosis serotype O:3 (strain YPIII), this protein is Autoinducer 2 import system permease protein LsrC (lsrC).